The primary structure comprises 443 residues: Methyl-coenzyme M reductase II subunit beta (443 aa).

Coenzyme M is bound at residue Y367. Residue G369 coordinates coenzyme B.

Belongs to the methyl-coenzyme M reductase beta subunit family. In terms of assembly, MCR is a hexamer of two alpha, two beta, and two gamma chains, forming a dimer of heterotrimers. Requires coenzyme F430 as cofactor.

It carries out the reaction coenzyme B + methyl-coenzyme M = methane + coenzyme M-coenzyme B heterodisulfide. Its pathway is one-carbon metabolism; methyl-coenzyme M reduction; methane from methyl-coenzyme M: step 1/1. In terms of biological role, component of the methyl-coenzyme M reductase (MCR) I that catalyzes the reductive cleavage of methyl-coenzyme M (CoM-S-CH3 or 2-(methylthio)ethanesulfonate) using coenzyme B (CoB or 7-mercaptoheptanoylthreonine phosphate) as reductant which results in the production of methane and the mixed heterodisulfide of CoB and CoM (CoM-S-S-CoB). This is the final step in methanogenesis. This Methanothermobacter marburgensis (strain ATCC BAA-927 / DSM 2133 / JCM 14651 / NBRC 100331 / OCM 82 / Marburg) (Methanobacterium thermoautotrophicum) protein is Methyl-coenzyme M reductase II subunit beta.